An 837-amino-acid chain; its full sequence is Tuftelin-interacting protein 11 (837 aa).

Composition is skewed to basic and acidic residues over residues 1–13 (MSLS…GEGR) and 53–64 (VWAERDSDDERP). Disordered regions lie at residues 1–21 (MSLS…DDER), 53–72 (VWAE…KRAR), and 85–133 (LKKG…KGFA). The interval 1–50 (MSLSHLYRDGEGRIDDDDDERENFEITDWDLQNEFNPNRQRHWQTKEEAT) is required for interaction with DHX15. Phosphoserine is present on residues serine 2, serine 59, and serine 98. Acidic residues predominate over residues 91–102 (EEAELEDSDDEE). Positions 103 to 116 (RPVKQDDFPKDFGP) are enriched in basic and acidic residues. At serine 144 the chain carries Phosphoserine. The G-patch domain occupies 149 to 195 (TKGIGQKLLQKMGYVPGRGLGKNAQGIINPIEAKQRKGKGAVGAYGS). A disordered region spans residues 179–236 (IEAKQRKGKGAVGAYGSERTTQSMQDFPVVDSEEEAEEEFQKELSQWRKDPSGSKKKP). Residue serine 210 is modified to Phosphoserine. Residues 217–231 (EFQKELSQWRKDPSG) are compositionally biased toward basic and acidic residues. A Nuclear localization signal motif is present at residues 700-705 (VKDKFN). The segment at 710 to 734 (IMNRAVSSNVGAYMQPGARENIAYL) is required for nuclear speckle localization.

It belongs to the TFP11/STIP family. As to quaternary structure, identified in the spliceosome C complex. Found in the Intron Large (IL) complex, a post-mRNA release spliceosomal complex containing the excised intron, U2, U5 and U6 snRNPs, and splicing factors. Interacts with TUFT1. Interacts with DHX15; indicative for a recruitment of DHX15 to the IL complex. Interacts with GCFC2.

It is found in the cytoplasm. Its subcellular location is the nucleus. In terms of biological role, involved in pre-mRNA splicing, specifically in spliceosome disassembly during late-stage splicing events. Intron turnover seems to proceed through reactions in two lariat-intron associated complexes termed Intron Large (IL) and Intron Small (IS). In cooperation with DHX15 seems to mediate the transition of the U2, U5 and U6 snRNP-containing IL complex to the snRNP-free IS complex leading to efficient debranching and turnover of excised introns. May play a role in the differentiation of ameloblasts and odontoblasts or in the forming of the enamel extracellular matrix. The sequence is that of Tuftelin-interacting protein 11 (TFIP11) from Macaca mulatta (Rhesus macaque).